The following is a 261-amino-acid chain: Glucose 1-dehydrogenase 4 (261 aa).

11–35 provides a ligand contact to NAD(+); the sequence is VITGGSTGLGRAMAVRFGQEEAKVV. S145 provides a ligand contact to substrate. The active-site Proton acceptor is the Y158.

This sequence belongs to the short-chain dehydrogenases/reductases (SDR) family. Homotetramer.

The catalysed reaction is D-glucose + NAD(+) = D-glucono-1,5-lactone + NADH + H(+). It catalyses the reaction D-glucose + NADP(+) = D-glucono-1,5-lactone + NADPH + H(+). The protein is Glucose 1-dehydrogenase 4 (gdhIV) of Priestia megaterium (Bacillus megaterium).